The primary structure comprises 105 residues: METLRYRFDGQRGARAGLEHALVGVVASGNLEVLVERVPLEGAMEIEILTAARGFGAIWQAVLDDFAARHPLRDVRISINDVGATPAVVSLRLEQALEVLQGADA.

At Ser-28 the chain carries O-(phosphoribosyl dephospho-coenzyme A)serine.

The protein belongs to the MdcC family. Covalently binds the prosthetic group of malonate decarboxylase.

The protein localises to the cytoplasm. In terms of biological role, subunit of malonate decarboxylase, it is an acyl carrier protein to which acetyl and malonyl thioester residues are bound via a 2'-(5''-phosphoribosyl)-3'-dephospho-CoA prosthetic group and turn over during the catalytic mechanism. In Xanthomonas euvesicatoria pv. vesicatoria (strain 85-10) (Xanthomonas campestris pv. vesicatoria), this protein is Malonate decarboxylase acyl carrier protein.